The chain runs to 232 residues: Ubiquinone biosynthesis O-methyltransferase (232 aa).

S-adenosyl-L-methionine is bound by residues Arg-36, Gly-55, Asp-76, and Leu-120.

The protein belongs to the methyltransferase superfamily. UbiG/COQ3 family.

It catalyses the reaction a 3-demethylubiquinol + S-adenosyl-L-methionine = a ubiquinol + S-adenosyl-L-homocysteine + H(+). It carries out the reaction a 3-(all-trans-polyprenyl)benzene-1,2-diol + S-adenosyl-L-methionine = a 2-methoxy-6-(all-trans-polyprenyl)phenol + S-adenosyl-L-homocysteine + H(+). It functions in the pathway cofactor biosynthesis; ubiquinone biosynthesis. O-methyltransferase that catalyzes the 2 O-methylation steps in the ubiquinone biosynthetic pathway. The polypeptide is Ubiquinone biosynthesis O-methyltransferase (Pseudomonas fluorescens (strain Pf0-1)).